The chain runs to 423 residues: Enolase (423 aa).

Gln-164 contacts (2R)-2-phosphoglycerate. Residue Glu-206 is the Proton donor of the active site. Positions 243, 289, and 316 each coordinate Mg(2+). (2R)-2-phosphoglycerate is bound by residues Lys-341, Arg-370, Ser-371, and Lys-392. Lys-341 functions as the Proton acceptor in the catalytic mechanism.

This sequence belongs to the enolase family. The cofactor is Mg(2+).

The protein resides in the cytoplasm. Its subcellular location is the secreted. It localises to the cell surface. The enzyme catalyses (2R)-2-phosphoglycerate = phosphoenolpyruvate + H2O. Its pathway is carbohydrate degradation; glycolysis; pyruvate from D-glyceraldehyde 3-phosphate: step 4/5. Catalyzes the reversible conversion of 2-phosphoglycerate (2-PG) into phosphoenolpyruvate (PEP). It is essential for the degradation of carbohydrates via glycolysis. This chain is Enolase, found in Desulfotalea psychrophila (strain LSv54 / DSM 12343).